The following is a 132-amino-acid chain: Histone H2A (132 aa).

Residues 1-10 (MTGGKSGGKA) are compositionally biased toward gly residues. The tract at residues 1-24 (MTGGKSGGKASGSKNAQSRSSKAG) is disordered. N6-acetyllysine occurs at positions 5 and 9. At Gln106 the chain carries N5-methylglutamine. Ser129 is subject to Phosphoserine. The short motif at 129–130 (SQ) is the [ST]-Q motif element.

The protein belongs to the histone H2A family. The nucleosome is a histone octamer containing two molecules each of H2A, H2B, H3 and H4 assembled in one H3-H4 heterotetramer and two H2A-H2B heterodimers. The octamer wraps approximately 147 bp of DNA. Post-translationally, phosphorylated to form H2AS128ph (gamma-H2A) in response to DNA double-strand breaks (DSBs) generated by exogenous genotoxic agents and by stalled replication forks. Phosphorylation is dependent on the DNA damage checkpoint kinases mec1/ATR and tel1/ATM, spreads on either side of a detected DSB site and may mark the surrounding chromatin for recruitment of proteins required for DNA damage signaling and repair. Gamma-H2A is removed from the DNA prior to the strand invasion-primer extension step of the repair process and subsequently dephosphorylated. Dephosphorylation is necessary for efficient recovery from the DNA damage checkpoint. In terms of processing, acetylated by esa1 to form H2AK4ac and H2AK7ac.

The protein localises to the nucleus. Its subcellular location is the chromosome. Functionally, core component of nucleosome which plays a central role in DNA double strand break (DSB) repair. Nucleosomes wrap and compact DNA into chromatin, limiting DNA accessibility to the cellular machineries which require DNA as a template. Histones thereby play a central role in transcription regulation, DNA repair, DNA replication and chromosomal stability. DNA accessibility is regulated via a complex set of post-translational modifications of histones, also called histone code, and nucleosome remodeling. In Emericella nidulans (strain FGSC A4 / ATCC 38163 / CBS 112.46 / NRRL 194 / M139) (Aspergillus nidulans), this protein is Histone H2A (htaA).